We begin with the raw amino-acid sequence, 57 residues long: DNA-directed RNA polymerase subunit Rpo6 (57 aa).

Belongs to the archaeal Rpo6/eukaryotic RPB6 RNA polymerase subunit family. Part of the RNA polymerase complex.

It localises to the cytoplasm. It carries out the reaction RNA(n) + a ribonucleoside 5'-triphosphate = RNA(n+1) + diphosphate. DNA-dependent RNA polymerase (RNAP) catalyzes the transcription of DNA into RNA using the four ribonucleoside triphosphates as substrates. In Thermococcus onnurineus (strain NA1), this protein is DNA-directed RNA polymerase subunit Rpo6.